Here is a 79-residue protein sequence, read N- to C-terminus: Conotoxin Tr6.3 (79 aa).

An N-terminal signal peptide occupies residues 1 to 22 (MKLTCVLIISVLFLTASQLITA). A propeptide spanning residues 23 to 47 (VYSRDKQQYRAARLRDEMRNLKGAR) is cleaved from the precursor. Intrachain disulfides connect cysteine 49-cysteine 62, cysteine 56-cysteine 67, and cysteine 61-cysteine 77. 2 positions are modified to 4-hydroxyproline: proline 60 and proline 63.

The protein belongs to the conotoxin O1 superfamily. Expressed by the venom duct.

It is found in the secreted. Ion channel inhibitor that inhibits the increase in intracellular calcium upon depolarization in DRG neurons. In vivo, both intraperitoneal and intracranial injections into mice induce hyperactivity. The sequence is that of Conotoxin Tr6.3 from Conus terebra (Sea snail).